We begin with the raw amino-acid sequence, 372 residues long: Heat-inducible transcription repressor HrcA (372 aa).

The disordered stretch occupies residues 300 to 334 (YGRSGAAGEPAGNDPVGEPETESETESQTNDTEPI).

Belongs to the HrcA family.

Functionally, negative regulator of class I heat shock genes (grpE-dnaK-dnaJ and groELS operons). Prevents heat-shock induction of these operons. The sequence is that of Heat-inducible transcription repressor HrcA from Bifidobacterium longum (strain DJO10A).